A 648-amino-acid chain; its full sequence is Acyl-CoA-binding domain-containing protein 5 (648 aa).

Positions 13 to 107 (YPERFYAAAS…LEEADPGWYP (95 aa)) constitute an ACB domain. An acyl-CoA contacts are provided by residues lysine 34, 49–53 (YTLHQ), and lysine 75. Kelch repeat units follow at residues 196–244 (KMYM…KLTH), 256–306 (QLLS…LVGK), 307–357 (SLVI…VHAE), 359–408 (YLLI…TIGE), 409–457 (NWYI…LVVS), and 464–509 (IVVA…AVNN). Position 517 is a phosphoserine (serine 517). Residues 520–632 (KVEGKADRII…AATMNAKRQS (113 aa)) adopt a coiled-coil conformation. Residues 625–634 (TMNAKRQSSG) are compositionally biased toward polar residues. The segment at 625-648 (TMNAKRQSSGGVWGWLAGTPPPKT) is disordered.

It belongs to the ACBP family. Expressed in roots, stems, leaves, flowers and siliques.

It localises to the cytoplasm. Its function is as follows. Binds medium- and long-chain acyl-CoA esters with very high affinity. Can interact in vitro with oleoyl-CoA, barely with palmitoyl-CoA, but not with arachidonyl-CoA. May function as an intracellular carrier of acyl-CoA esters. This is Acyl-CoA-binding domain-containing protein 5 (ACBP5) from Arabidopsis thaliana (Mouse-ear cress).